We begin with the raw amino-acid sequence, 81 residues long: Photosystem I iron-sulfur center (81 aa).

4Fe-4S ferredoxin-type domains are found at residues 2-31 (AHTV…MVPW) and 37-68 (GQIA…IRVY). [4Fe-4S] cluster is bound by residues Cys-11, Cys-14, Cys-17, Cys-21, Cys-48, Cys-51, Cys-54, and Cys-58.

In terms of assembly, the cyanobacterial PSI reaction center is composed of one copy each of PsaA,B,C,D,E,F,I,J,K,L,M and X, and forms trimeric complexes. The cofactor is [4Fe-4S] cluster.

The protein localises to the cellular thylakoid membrane. It catalyses the reaction reduced [plastocyanin] + hnu + oxidized [2Fe-2S]-[ferredoxin] = oxidized [plastocyanin] + reduced [2Fe-2S]-[ferredoxin]. In terms of biological role, apoprotein for the two 4Fe-4S centers FA and FB of photosystem I (PSI); essential for photochemical activity. FB is the terminal electron acceptor of PSI, donating electrons to ferredoxin. The C-terminus interacts with PsaA/B/D and helps assemble the protein into the PSI complex. Required for binding of PsaD and PsaE to PSI. PSI is a plastocyanin/cytochrome c6-ferredoxin oxidoreductase, converting photonic excitation into a charge separation, which transfers an electron from the donor P700 chlorophyll pair to the spectroscopically characterized acceptors A0, A1, FX, FA and FB in turn. The sequence is that of Photosystem I iron-sulfur center (psaC) from Synechococcus elongatus.